The following is a 227-amino-acid chain: Phosphatidylserine decarboxylase proenzyme (227 aa).

Ser-181 serves as the catalytic Schiff-base intermediate with substrate; via pyruvic acid. Ser-181 carries the post-translational modification Pyruvic acid (Ser); by autocatalysis.

It belongs to the phosphatidylserine decarboxylase family. PSD-A subfamily. As to quaternary structure, heterodimer of a large membrane-associated beta subunit and a small pyruvoyl-containing alpha subunit. Pyruvate serves as cofactor. Is synthesized initially as an inactive proenzyme. Formation of the active enzyme involves a self-maturation process in which the active site pyruvoyl group is generated from an internal serine residue via an autocatalytic post-translational modification. Two non-identical subunits are generated from the proenzyme in this reaction, and the pyruvate is formed at the N-terminus of the alpha chain, which is derived from the carboxyl end of the proenzyme. The post-translation cleavage follows an unusual pathway, termed non-hydrolytic serinolysis, in which the side chain hydroxyl group of the serine supplies its oxygen atom to form the C-terminus of the beta chain, while the remainder of the serine residue undergoes an oxidative deamination to produce ammonia and the pyruvoyl prosthetic group on the alpha chain.

The protein localises to the cell membrane. It catalyses the reaction a 1,2-diacyl-sn-glycero-3-phospho-L-serine + H(+) = a 1,2-diacyl-sn-glycero-3-phosphoethanolamine + CO2. It functions in the pathway phospholipid metabolism; phosphatidylethanolamine biosynthesis; phosphatidylethanolamine from CDP-diacylglycerol: step 2/2. In terms of biological role, catalyzes the formation of phosphatidylethanolamine (PtdEtn) from phosphatidylserine (PtdSer). This is Phosphatidylserine decarboxylase proenzyme from Anaplasma phagocytophilum (strain HZ).